A 123-amino-acid chain; its full sequence is Large ribosomal subunit protein bL20 (123 aa).

Belongs to the bacterial ribosomal protein bL20 family.

Binds directly to 23S ribosomal RNA and is necessary for the in vitro assembly process of the 50S ribosomal subunit. It is not involved in the protein synthesizing functions of that subunit. The protein is Large ribosomal subunit protein bL20 of Pseudothermotoga lettingae (strain ATCC BAA-301 / DSM 14385 / NBRC 107922 / TMO) (Thermotoga lettingae).